A 460-amino-acid chain; its full sequence is Spermatogenesis-defective protein 39 homolog (460 aa).

Thr-21 bears the Phosphothreonine mark. Positions 70-101 (SIKETAGSSGSTSEGREQMKGRNSFYTQLPKP) are disordered. Over residues 73 to 82 (ETAGSSGSTS) the composition is skewed to low complexity. At Thr-115 the chain carries Phosphothreonine. Ser-119, Ser-122, and Ser-128 each carry phosphoserine. Over residues 121–133 (QSLSDALSDTPAK) the composition is skewed to polar residues. Residues 121–141 (QSLSDALSDTPAKTYSPELGR) are disordered. At Thr-130 the chain carries Phosphothreonine.

The protein belongs to the SPE39 family. As to quaternary structure, interacts with VPS33B. Associates with the homotypic fusion and vacuole protein sorting (HOPS) complex; impaired by VPS33B. Interacts with RAB11A.

The protein resides in the cytoplasm. The protein localises to the cytoplasmic vesicle. It is found in the early endosome. It localises to the recycling endosome. Its subcellular location is the late endosome. Functionally, proposed to be involved in endosomal maturation implicating in part VPS33B. In epithelial cells, the VPS33B:VIPAS39 complex may play a role in the apical RAB11A-dependent recycling pathway and in the maintenance of the apical-basolateral polarity. May play a role in lysosomal trafficking, probably via association with the core HOPS complex in a discrete population of endosomes; the functions seems to be independent of VPS33B. May play a role in vesicular trafficking during spermatogenesis. May be involved in direct or indirect transcriptional regulation of E-cadherin. In Rattus norvegicus (Rat), this protein is Spermatogenesis-defective protein 39 homolog (Vipas39).